A 367-amino-acid chain; its full sequence is Glutamate 5-kinase (367 aa).

Lys10 contributes to the ATP binding site. The substrate site is built by Ser50, Asp137, and Asn149. ATP is bound by residues 169 to 170 (TD) and 211 to 217 (TGGMGTK). Residues 275 to 353 (AGEITVDAGA…QQIDAILGYE (79 aa)) enclose the PUA domain.

Belongs to the glutamate 5-kinase family.

The protein localises to the cytoplasm. The catalysed reaction is L-glutamate + ATP = L-glutamyl 5-phosphate + ADP. The protein operates within amino-acid biosynthesis; L-proline biosynthesis; L-glutamate 5-semialdehyde from L-glutamate: step 1/2. In terms of biological role, catalyzes the transfer of a phosphate group to glutamate to form L-glutamate 5-phosphate. This chain is Glutamate 5-kinase, found in Klebsiella pneumoniae subsp. pneumoniae (strain ATCC 700721 / MGH 78578).